We begin with the raw amino-acid sequence, 781 residues long: Mitochondrial inner membrane m-AAA protease component paraplegin (781 aa).

The transit peptide at 1–43 (MAAALLLLRALRQSPEPGPWRLWAQLSGRSPGLFSGAGGRRPY) directs the protein to the mitochondrion. The propeptide at 44–105 (VVRGTPIGLA…GSTLYFNTSG (62 aa)) is removed in mature form. The tract at residues 105–134 (GLKQKNKDDDKPKGKAPEDDEEERRRKERE) is disordered. At 106–144 (LKQKNKDDDKPKGKAPEDDEEERRRKEREDQMYRERLRT) the chain is on the mitochondrial matrix side. Over residues 109–134 (KNKDDDKPKGKAPEDDEEERRRKERE) the composition is skewed to basic and acidic residues. The helical transmembrane segment at 145–165 (LFIIAIVMSLLNSLSTSGGSI) threads the bilayer. Residues 166-248 (SWADFVNEML…DRIPVSYKRT (83 aa)) lie on the Mitochondrial intermembrane side of the membrane. The chain crosses the membrane as a helical span at residues 249–269 (GFFGNALYALGMTAVGLAILW). Over 270-781 (YVFRLAGMTG…ASGEEEAPAP (512 aa)) the chain is Mitochondrial matrix. ATP-binding residues include Ala-312, Gly-352, Cys-353, Gly-354, Lys-355, Thr-356, and Leu-357. Tyr-505 carries the 3'-nitrotyrosine modification. Residue His-574 participates in Zn(2+) binding. The active site involves Glu-575. 2 residues coordinate Zn(2+): His-578 and Asp-650. An interaction with PPIF region spans residues 701–781 (HEARLLVARA…ASGEEEAPAP (81 aa)).

In the N-terminal section; belongs to the AAA ATPase family. This sequence in the C-terminal section; belongs to the peptidase M41 family. In terms of assembly, forms heterooligomers with AFG3L2; the m-AAA protease is composed of heterohexamers of AFG3L2 and SPG7. Component of the mitochondrial permeability transition pore complex (mPTPC), at least composed of SPG7, VDAC1 and PPIF. Interacts with MAIP1. Requires Zn(2+) as cofactor. In terms of processing, upon import into the mitochondrion, the N-terminal transit peptide is cleaved by the mitochondrial-processing peptidase (MPP) to generate an intermediate form which undergoes a second proteolytic cleavage mediated by proteases AFG3L2 removing an additional N-terminal fragment to generate the proteolytically active mature form.

It localises to the mitochondrion inner membrane. The enzyme catalyses ATP + H2O = ADP + phosphate + H(+). In terms of biological role, catalytic component of the m-AAA protease, a protease that plays a key role in proteostasis of inner mitochondrial membrane proteins, and which is essential for axonal and neuron development. SPG7 possesses both ATPase and protease activities: the ATPase activity is required to unfold substrates, threading them into the internal proteolytic cavity for hydrolysis into small peptide fragments. The m-AAA protease exerts a dual role in the mitochondrial inner membrane: it mediates the processing of specific regulatory proteins and ensures protein quality control by degrading misfolded polypeptides. Mediates protein maturation of the mitochondrial ribosomal subunit MRPL32/bL32m by catalyzing the cleavage of the presequence of MRPL32/bL32m prior to assembly into the mitochondrial ribosome. Acts as a regulator of calcium in neurons by mediating degradation of SMDT1/EMRE before its assembly with the uniporter complex, limiting the availability of SMDT1/EMRE for MCU assembly and promoting efficient assembly of gatekeeper subunits with MCU. Also regulates mitochondrial calcium by catalyzing degradation of MCU. Plays a role in the formation and regulation of the mitochondrial permeability transition pore (mPTP) and its proteolytic activity is dispensable for this function. In Rattus norvegicus (Rat), this protein is Mitochondrial inner membrane m-AAA protease component paraplegin (Spg7).